Here is a 154-residue protein sequence, read N- to C-terminus: Ribonuclease H (154 aa).

In terms of domain architecture, RNase H type-1 spans 7-148; the sequence is KPETVEIYTD…ADALAREGIA (142 aa). Positions 16, 54, 76, and 140 each coordinate Mg(2+).

Belongs to the RNase H family. As to quaternary structure, monomer. Mg(2+) serves as cofactor.

Its subcellular location is the cytoplasm. The catalysed reaction is Endonucleolytic cleavage to 5'-phosphomonoester.. Functionally, endonuclease that specifically degrades the RNA of RNA-DNA hybrids. This chain is Ribonuclease H, found in Paramagnetospirillum magneticum (strain ATCC 700264 / AMB-1) (Magnetospirillum magneticum).